Reading from the N-terminus, the 214-residue chain is NADH-quinone oxidoreductase subunit C (214 aa).

This sequence belongs to the complex I 30 kDa subunit family. NDH-1 is composed of 14 different subunits. Subunits NuoB, C, D, E, F, and G constitute the peripheral sector of the complex.

The protein localises to the cell inner membrane. It catalyses the reaction a quinone + NADH + 5 H(+)(in) = a quinol + NAD(+) + 4 H(+)(out). Functionally, NDH-1 shuttles electrons from NADH, via FMN and iron-sulfur (Fe-S) centers, to quinones in the respiratory chain. The immediate electron acceptor for the enzyme in this species is believed to be ubiquinone. Couples the redox reaction to proton translocation (for every two electrons transferred, four hydrogen ions are translocated across the cytoplasmic membrane), and thus conserves the redox energy in a proton gradient. This is NADH-quinone oxidoreductase subunit C from Francisella tularensis subsp. novicida (strain U112).